We begin with the raw amino-acid sequence, 244 residues long: uncharacterized protein (244 aa).

Helical transmembrane passes span 5-27 (KFAL…LLAV), 37-59 (IVMV…SRFL), 87-106 (LVFI…FYYG), 116-138 (LSLF…FFVA), 159-181 (FWIW…VQPS), and 196-218 (GVFN…RMVA).

It localises to the cell membrane. This is an uncharacterized protein from Archaeoglobus fulgidus (strain ATCC 49558 / DSM 4304 / JCM 9628 / NBRC 100126 / VC-16).